Consider the following 363-residue polypeptide: Dihydroorotate dehydrogenase (quinone) (363 aa).

Residues 67 to 71 (AGYDK) and T91 contribute to the FMN site. K71 serves as a coordination point for substrate. Residue 116 to 120 (NRMGF) coordinates substrate. Positions 145 and 178 each coordinate FMN. Substrate is bound at residue N178. The active-site Nucleophile is S181. Substrate is bound at residue N183. FMN-binding residues include K224 and T254. 255 to 256 (NT) is a binding site for substrate. FMN is bound by residues G275, G304, and 325-326 (YS).

The protein belongs to the dihydroorotate dehydrogenase family. Type 2 subfamily. As to quaternary structure, monomer. The cofactor is FMN.

The protein localises to the cell membrane. The enzyme catalyses (S)-dihydroorotate + a quinone = orotate + a quinol. It participates in pyrimidine metabolism; UMP biosynthesis via de novo pathway; orotate from (S)-dihydroorotate (quinone route): step 1/1. Its function is as follows. Catalyzes the conversion of dihydroorotate to orotate with quinone as electron acceptor. In Acidithiobacillus ferrooxidans (strain ATCC 23270 / DSM 14882 / CIP 104768 / NCIMB 8455) (Ferrobacillus ferrooxidans (strain ATCC 23270)), this protein is Dihydroorotate dehydrogenase (quinone).